A 348-amino-acid chain; its full sequence is Phenylalanine--tRNA ligase alpha subunit (348 aa).

Residue Glu-259 participates in Mg(2+) binding.

The protein belongs to the class-II aminoacyl-tRNA synthetase family. Phe-tRNA synthetase alpha subunit type 1 subfamily. In terms of assembly, tetramer of two alpha and two beta subunits. Requires Mg(2+) as cofactor.

Its subcellular location is the cytoplasm. The catalysed reaction is tRNA(Phe) + L-phenylalanine + ATP = L-phenylalanyl-tRNA(Phe) + AMP + diphosphate + H(+). The polypeptide is Phenylalanine--tRNA ligase alpha subunit (Latilactobacillus sakei subsp. sakei (strain 23K) (Lactobacillus sakei subsp. sakei)).